A 646-amino-acid polypeptide reads, in one-letter code: MIRMALKPLVAACLLASLSTAPQAAPSPYSTLVVFGDSLSDAGQFPDPAGPAGSTSRFTNRVGPTYQNGSGEIFGPTAPMLLGNQLGIAPGDLAASTSPVNAQQGIADGNNWAVGGYRTDQIYDSITAANGSLIERDNTLLRSRDGYLVDRARQGLGADPNALYYITGGGNDFLQGRILNDVQAQQAAGRLVDSVQALQQAGARYIVVWLLPDLGLTPATFGGPLQPFASQLSGTFNAELTAQLSQAGANVIPLNIPLLLKEGMANPASFGLAADQNLIGTCFSGNGCTMNPTYGINGSTPDPSKLLFNDSVHPTITGQRLIADYTYSLLSAPWELTLLPEMAHGTLRAYQDELRSQWQADWENWQNVGQWRGFVGGGGQRLDFDSQDSAASGDGNGYNLTLGGSYRIDEAWRAGVAAGFYRQKLEAGAKDSDYRMNSYMASAFVQYQENRWWADAALTGGYLDYDDLKRKFALGGGERSEKGDTNGHLWAFSARLGYDIAQQADSPWHLSPFVSADYARVEVDGYSEKGASATALDYDDQKRSSKRLGAGLQGKYAFGSDTQLFAEYAHEREYEDDTQDLTMSLNSLPGNRFTLEGYTPQDHLNRVSLGFSQKLAPELSLRGGYNWRKGEDDTQQSVSLALSLDF.

An N-terminal signal peptide occupies residues 1–24; sequence MIRMALKPLVAACLLASLSTAPQA. Residues 25–397 lie on the Extracellular side of the membrane; sequence APSPYSTLVV…DSAASGDGNG (373 aa). Ser-38 functions as the Nucleophile in the catalytic mechanism. Active-site residues include Asp-310 and His-313. In terms of domain architecture, Autotransporter spans 366–646; it reads QNVGQWRGFV…SVSLALSLDF (281 aa). A beta stranded transmembrane segment spans residues 398–408; it reads YNLTLGGSYRI. At 409-410 the chain is on the periplasmic side; sequence DE. A beta stranded transmembrane segment spans residues 411 to 421; that stretch reads AWRAGVAAGFY. Residues 422-437 are Extracellular-facing; it reads RQKLEAGAKDSDYRMN. Residues 438–447 traverse the membrane as a beta stranded segment; that stretch reads SYMASAFVQY. Residues 448 to 451 lie on the Periplasmic side of the membrane; it reads QENR. Residues 452-461 traverse the membrane as a beta stranded segment; that stretch reads WWADAALTGG. Residues 462–488 are Extracellular-facing; it reads YLDYDDLKRKFALGGGERSEKGDTNGH. Residues 489–500 form a beta stranded membrane-spanning segment; the sequence is LWAFSARLGYDI. Over 501 to 507 the chain is Periplasmic; that stretch reads AQQADSP. The beta stranded transmembrane segment at 508-518 threads the bilayer; it reads WHLSPFVSADY. Over 519–547 the chain is Extracellular; the sequence is ARVEVDGYSEKGASATALDYDDQKRSSKR. The beta stranded transmembrane segment at 548–558 threads the bilayer; the sequence is LGAGLQGKYAF. At 559–561 the chain is on the periplasmic side; the sequence is GSD. The beta stranded transmembrane segment at 562–571 threads the bilayer; sequence TQLFAEYAHE. Over 572 to 605 the chain is Extracellular; the sequence is REYEDDTQDLTMSLNSLPGNRFTLEGYTPQDHLN. The chain crosses the membrane as a beta stranded span at residues 606 to 615; it reads RVSLGFSQKL. Over 616-618 the chain is Periplasmic; it reads APE. The beta stranded transmembrane segment at 619–628 threads the bilayer; sequence LSLRGGYNWR. Topologically, residues 629–636 are extracellular; the sequence is KGEDDTQQ. A beta stranded transmembrane segment spans residues 637–646; the sequence is SVSLALSLDF.

The protein belongs to the 'GDSL' lipolytic enzyme family.

It is found in the cell outer membrane. It catalyses the reaction a carboxylic ester + H2O = an alcohol + a carboxylate + H(+). In terms of biological role, esterase whose enzymatic activity is required for rhamnolipid production, all kinds of cell motility (swimming, swarming, and twitching), and biofilm formation; the exact role of EstA in these processes is unclear. In vitro, has pronounced esterase activities towards p-nitrophenyl esters of short acyl chain length (C4-C6) and Tween detergents. Also shows relatively high activity towards beta-naphthyl butyrate, whereas its activities towards triacylglycerols and acyls-CoA are negligible. This chain is Esterase EstA (estA), found in Pseudomonas aeruginosa (strain ATCC 15692 / DSM 22644 / CIP 104116 / JCM 14847 / LMG 12228 / 1C / PRS 101 / PAO1).